A 110-amino-acid polypeptide reads, in one-letter code: MTDTEFLDHAEKLLLAVEQGCDRINDTTDADLDAQRSGGMVTITFPNRSQIVINLQKPLHEIWMAAQSGGYHYRLEDGAWKDTKGDGEFFAALTRDASRQSGMPLVFSAS.

Belongs to the frataxin family.

Functionally, involved in iron-sulfur (Fe-S) cluster assembly. May act as a regulator of Fe-S biogenesis. This Paracidovorax citrulli (strain AAC00-1) (Acidovorax citrulli) protein is Iron-sulfur cluster assembly protein CyaY.